The sequence spans 484 residues: Cobyric acid synthase (484 aa).

Positions 251-438 (ALKVAVPVLS…LHGLFGSDPY (188 aa)) constitute a GATase cobBQ-type domain. C333 functions as the Nucleophile in the catalytic mechanism. The active site involves H430.

Belongs to the CobB/CobQ family. CobQ subfamily.

The protein operates within cofactor biosynthesis; adenosylcobalamin biosynthesis. Catalyzes amidations at positions B, D, E, and G on adenosylcobyrinic A,C-diamide. NH(2) groups are provided by glutamine, and one molecule of ATP is hydrogenolyzed for each amidation. In Sinorhizobium medicae (strain WSM419) (Ensifer medicae), this protein is Cobyric acid synthase.